The following is a 69-amino-acid chain: Putative membrane protein insertion efficiency factor (69 aa).

The protein belongs to the UPF0161 family.

Its subcellular location is the cell membrane. In terms of biological role, could be involved in insertion of integral membrane proteins into the membrane. The chain is Putative membrane protein insertion efficiency factor from Clostridium botulinum (strain Okra / Type B1).